A 642-amino-acid chain; its full sequence is 1-deoxy-D-xylulose-5-phosphate synthase 2 (642 aa).

Residues His-73 and 113–115 each bind thiamine diphosphate; that span reads SHA. Asp-144 is a binding site for Mg(2+). Thiamine diphosphate-binding positions include 145-146, Asn-174, Tyr-285, and Glu-366; that span reads GA. Asn-174 provides a ligand contact to Mg(2+).

This sequence belongs to the transketolase family. DXPS subfamily. As to quaternary structure, homodimer. It depends on Mg(2+) as a cofactor. Thiamine diphosphate is required as a cofactor.

It carries out the reaction D-glyceraldehyde 3-phosphate + pyruvate + H(+) = 1-deoxy-D-xylulose 5-phosphate + CO2. It participates in metabolic intermediate biosynthesis; 1-deoxy-D-xylulose 5-phosphate biosynthesis; 1-deoxy-D-xylulose 5-phosphate from D-glyceraldehyde 3-phosphate and pyruvate: step 1/1. Catalyzes the acyloin condensation reaction between C atoms 2 and 3 of pyruvate and glyceraldehyde 3-phosphate to yield 1-deoxy-D-xylulose-5-phosphate (DXP). The sequence is that of 1-deoxy-D-xylulose-5-phosphate synthase 2 from Streptomyces coelicolor (strain ATCC BAA-471 / A3(2) / M145).